Reading from the N-terminus, the 344-residue chain is Ferredoxin--NADP reductase (344 aa).

8 residues coordinate FAD: Ser-12, Asp-31, Lys-39, Tyr-43, Val-83, Ile-118, Asp-285, and Ser-326.

The protein belongs to the ferredoxin--NADP reductase type 2 family. As to quaternary structure, homodimer. FAD is required as a cofactor.

It carries out the reaction 2 reduced [2Fe-2S]-[ferredoxin] + NADP(+) + H(+) = 2 oxidized [2Fe-2S]-[ferredoxin] + NADPH. This Staphylococcus aureus (strain MW2) protein is Ferredoxin--NADP reductase.